The following is a 496-amino-acid chain: MTVFDIFTSSTFFTSPFPLTVGILSISLSGVLWYLRRAKAPTQADAPPVYPFDPTTLDRKECKPPILTFGNSMILPNRYAHEIRNNDLLSFRDGLEKDFLTTVPGLEALFTGTFHNDIVWDTASAFSRKIGLLIEPLSTETGIFLQENWSEDTEWHTIPLNESMQFLIAQLTARIFVGNELCRNRDWIQLALGYTANRAAAIKELHQYGRLIPIVHWFLPSCRALRACVRNARPLVEGILNTHRKKHQGEQKEESLDALSWIDGVAGETGVKYDPTLTQLRLAYAAVHTTSDMMTKVLAAICEHDELVKPLREEIVAVVKEHGWTEAALAKMLLLDSVLKETQRLEPLASFTLSRIAREGVTLNDGTRVPKGTQARLTTDNMWNSGIYPEAARFDGYRFVKLRDQDTATGASSGGLSFVSVSANHMGFGYGKHACPGRFFAGAETKIALCHILLKYDLELVDRELAGAKTDGMMIWRDKRAMLRVKRRSDDIGLEF.

Residues 12 to 34 (FFTSPFPLTVGILSISLSGVLWY) form a helical membrane-spanning segment. Cysteine 435 contributes to the heme binding site.

It belongs to the cytochrome P450 family. The cofactor is heme.

It localises to the membrane. The protein operates within secondary metabolite biosynthesis; terpenoid biosynthesis. Its function is as follows. Cytochrome P450 monooxygenase; part of the cluster A that mediates the biosynthesis of chevalone E and its oxidized derivatives that possess a unique five-membered lactone ring and can synergistically enhance the cytotoxicity of doxorubicin (DOX) in breast cancer cells. Within the pathway, cle4 is involved in hydroxylation of the chavalone E scaffold at positions C-11 and C-12 and contributes with cle2 to the production of seven oxidation derivatives. The molecular scaffold is commonly biosynthesized by a series of enzymes including the non-reducing polyketide synthase (NR-PKS) cle1 that produces the alpha-pyrone triacetic acid lactone (TAL); The membrane-bound prenyltransferase cle5 that accepts TAL as its substrate to perform a C-3 geranylgeranylation reaction, in which the pathway-dedicated GGPS cle6 is required to provide GGPP, the other substrate of cle5; the FAD-dependent monooxygenase Cle3 that forms an (S)-epoxide ring at the terminal olefin of the geranylgeranyl group; and the terpene cyclase Cle7 that catalyzes the cyclization of the prenyl group that yields the pentacyclic pathway intermediate chevalone E. Chevalone E can derivatize into seven new oxidized analogs by the cytochrome P450 monooxygenases cle2 (acting at C-20) and cle4 (acting at C-11 and C-12). The chain is Cytochrome P450 monooxygenase cle4 from Aspergillus versicolor.